A 61-amino-acid chain; its full sequence is Large ribosomal subunit protein uL30 (61 aa).

It belongs to the universal ribosomal protein uL30 family. In terms of assembly, part of the 50S ribosomal subunit.

The polypeptide is Large ribosomal subunit protein uL30 (Chlorobium phaeovibrioides (strain DSM 265 / 1930) (Prosthecochloris vibrioformis (strain DSM 265))).